The sequence spans 493 residues: MTIQPSDKPLLEWAGDSLAIGLFEDAVELTGELATLDQKFSGVLKELIAEEEFKGKANSTIFTRVNPGRPVRKLILVGLGKPDALKLDTLRRAAAAVARVAKKQKSKILGFSFPLWNNDPAASAQAIAEGVELALYQDIRFKSEPEDKGSQIETVDLLGFSGQEAAITLANQIVSGVNLARELVAAPANAVTPITLAETAQAIAKDYGLQVEILEKEDCEKLGMGAFLGVAQASELPPKFIHLTYKPEGTPKKKLAIIGKGVTFDSGGLNIKGAGSGIETMKMDMGGAAATLGAAKAIAQIKPDVEVHFISAVAENMISGRAMHPGDILTASNGKTIEVNNTDAEGRLTLADALVYAEKLGLDAIVDLATLTGANVIALGDDIAGLYTPDDDVASQIEKAAQTSGEKIWRMPMEEKYFEGLKSGIADMKNTGPRPGGAITAALFLKQFVKETPWAHLDIAGPVWTDKENGYNGAGATGYGVRLLVNWVLGIGE.

The Mn(2+) site is built by Lys260 and Asp265. Lys272 is a catalytic residue. Mn(2+)-binding residues include Asp284, Asp343, and Glu345. The active site involves Arg347.

It belongs to the peptidase M17 family. The cofactor is Mn(2+).

Its subcellular location is the cytoplasm. It catalyses the reaction Release of an N-terminal amino acid, Xaa-|-Yaa-, in which Xaa is preferably Leu, but may be other amino acids including Pro although not Arg or Lys, and Yaa may be Pro. Amino acid amides and methyl esters are also readily hydrolyzed, but rates on arylamides are exceedingly low.. The enzyme catalyses Release of an N-terminal amino acid, preferentially leucine, but not glutamic or aspartic acids.. Its function is as follows. Presumably involved in the processing and regular turnover of intracellular proteins. Catalyzes the removal of unsubstituted N-terminal amino acids from various peptides. The sequence is that of Probable cytosol aminopeptidase from Nostoc punctiforme (strain ATCC 29133 / PCC 73102).